The primary structure comprises 188 residues: Holliday junction branch migration complex subunit RuvA (188 aa).

The segment at 1–62 (MIVGVRGVLV…EDAQLLYGFL (62 aa)) is domain I. Positions 63 to 135 (ELGEKKLFER…LSGFDTELII (73 aa)) are domain II. The flexible linker stretch occupies residues 135–139 (ISASE). Residues 140-188 (PKSLAVAQASEALESLGFKKDKISKALGSCSAVDTAILVKEALKLLQTI) form a domain III region.

The protein belongs to the RuvA family. In terms of assembly, homotetramer. Forms an RuvA(8)-RuvB(12)-Holliday junction (HJ) complex. HJ DNA is sandwiched between 2 RuvA tetramers; dsDNA enters through RuvA and exits via RuvB. An RuvB hexamer assembles on each DNA strand where it exits the tetramer. Each RuvB hexamer is contacted by two RuvA subunits (via domain III) on 2 adjacent RuvB subunits; this complex drives branch migration. In the full resolvosome a probable DNA-RuvA(4)-RuvB(12)-RuvC(2) complex forms which resolves the HJ.

It localises to the cytoplasm. In terms of biological role, the RuvA-RuvB-RuvC complex processes Holliday junction (HJ) DNA during genetic recombination and DNA repair, while the RuvA-RuvB complex plays an important role in the rescue of blocked DNA replication forks via replication fork reversal (RFR). RuvA specifically binds to HJ cruciform DNA, conferring on it an open structure. The RuvB hexamer acts as an ATP-dependent pump, pulling dsDNA into and through the RuvAB complex. HJ branch migration allows RuvC to scan DNA until it finds its consensus sequence, where it cleaves and resolves the cruciform DNA. The chain is Holliday junction branch migration complex subunit RuvA from Sulfurimonas denitrificans (strain ATCC 33889 / DSM 1251) (Thiomicrospira denitrificans (strain ATCC 33889 / DSM 1251)).